The chain runs to 694 residues: N,N-dimethylglycine/sarcosine dehydrogenase (694 aa).

The protein in the N-terminal section; belongs to the NADH:flavin oxidoreductase/NADH oxidase family. In terms of assembly, monomer. The purified enzyme exists in the form of a monomer, dimer or polymer under non-denaturing conditions, but only the monomeric protein exhibits enzyme activity. Requires FAD as cofactor. It depends on NAD(+) as a cofactor. NADP(+) serves as cofactor.

Its subcellular location is the cytoplasm. It carries out the reaction oxidized 2[4Fe-4S]-[ferredoxin] + N,N-dimethylglycine + H2O = reduced 2[4Fe-4S]-[ferredoxin] + sarcosine + formaldehyde + 2 H(+). The enzyme catalyses oxidized 2[4Fe-4S]-[ferredoxin] + sarcosine + H2O = reduced 2[4Fe-4S]-[ferredoxin] + formaldehyde + glycine + 2 H(+). Ca(2+) increases the activity by 12%, while the other metal ions tested have no or slightly inhibitory effects. The chelating agent EDTA inhibits the activity by 33%. Its function is as follows. Involved in degradation of glycine betaine. Catalyzes the demethylation of both N,N-dimethylglycine (DMG) and sarcosine, releasing formaldehyde and forming glycine as the final product. Does not show activity toward trimethylamine (TMA), histamine, glycine betaine (GB) or choline. The C-N bond in DMG is probably oxidized by removal of a hydride equivalent to form a labile imine intermediate, which is then spontaneously hydrolyzed in the presence of water, producing sarcosine and formaldehyde. The two protons subtracted from DMG are transferred to the non-covalently bound FAD, resulting in the reduced form of FAD, which is subsequently reoxidized by coupling with reduction of the enzyme-bound NAD(P)(+). Regeneration of NAD(P)(+) is achieved by electron transfer to the [4Fe-4S] cluster in the probable membrane-anchored ferredoxin csal_0991. The sequence is that of N,N-dimethylglycine/sarcosine dehydrogenase from Chromohalobacter salexigens (strain ATCC BAA-138 / DSM 3043 / CIP 106854 / NCIMB 13768 / 1H11).